Reading from the N-terminus, the 123-residue chain is MACLHTYIYIYIYIYNRTTCTRPWHTPSKDRLFECILHFLSQLARIRAPANGCTFEDGPCLLGLPKSASPSSRRRVFIGDSAYCRDHPRRNGLIRTRKVKLISVGRRVSFFSRRRPFIGPETV.

This is an uncharacterized protein from Saccharomyces cerevisiae (strain ATCC 204508 / S288c) (Baker's yeast).